Reading from the N-terminus, the 167-residue chain is Male-specific protein scotti (167 aa).

N-linked (GlcNAc...) asparagine glycans are attached at residues asparagine 30, asparagine 124, and asparagine 148.

This sequence belongs to the male-specific scotti family.

Post-meiotically transcribed gene that has a role in late spermiogenesis; required for actin cone progression during spermatid individualization. The chain is Male-specific protein scotti from Drosophila ananassae (Fruit fly).